The sequence spans 140 residues: Oocyte zinc finger protein XlCOF15 (140 aa).

5 consecutive C2H2-type zinc fingers follow at residues 6–28 (FTCKECSKSFSSNSHLSRHQKIH), 34–56 (FTCTECDKKFLTRSSLLLHQKVH), 62–84 (FICTECGKGFSAKSQLHRHHVIH), 90–112 (FTCAECGKTFSYKQSLVTHRAAH), and 118–140 (FICTECGKSFSHKNNLQTHLKSH).

This sequence belongs to the krueppel C2H2-type zinc-finger protein family.

It localises to the nucleus. In terms of biological role, may be involved in transcriptional regulation. In Xenopus laevis (African clawed frog), this protein is Oocyte zinc finger protein XlCOF15.